Reading from the N-terminus, the 373-residue chain is MNVIDLSDPAINVDYDSLIGIDNEESQEIFENEVKEDGQQEEQEEASSRKDGLIVEPGRDVESLRRAIRDQLLFKIHRQNQSDCADARKLSNDEEDESRQQKLERIREELEELKIENLTSEMQTEIKELCEIQSKLATESSSRLTNLRKKLLETYEGQDTVILPNIILDTSNIKRLQKLDQKISLMERFVGIPEALEAEEDRKSVHSKVNELYRSIQLLQGDDKAEGKLQKFRDRLVELNEEFENSLLGKKIQQDLRLKDDTVSKLVMPENKVKEINSMYSMFKQYQDSLPLLAERMKSLNKMNNRVIEVYETTKGLDSQITSIQEQGKVWLKALNELDKKFDEQEVKIRENMEQIRRKIDTLEDEALQRNSK.

The interval 33–53 is disordered; sequence EVKEDGQQEEQEEASSRKDGL. S91 carries the post-translational modification Phosphoserine. Coiled coils occupy residues 114–139, 200–245, and 331–367; these read KIENLTSEMQTEIKELCEIQSKLATE, EDRK…EFEN, and WLKALNELDKKFDEQEVKIRENMEQIRRKIDTLEDEA.

Component of the dynactin complex composed of at least ARP1, JNM1, NIP100 and ARP10. Dynactin comprises a short rod of ARP1 polymers attached to ARP10 at its pointed-end and probably associated with the capping protein at its barbed-end. The rod structure is implicated in dynein cargo binding. A sidearm formed by NIP100 projects from the ARP1 filament and is implicated in motor binding. Interacts with ARP1.

It is found in the cytoplasm. The protein localises to the cytoskeleton. Functionally, component of the dynactin complex which assists cytoplasmic dynein by increasing its processivity and by regulation of its cargo binding. The dynactin complex is required for the spindle translocation late in anaphase and is involved in a cell wall synthesis checkpoint. JNM1 is associated with the rod and links it to the projecting sidearm. Required for proper nuclear migration during the mitotic cell cycle and for astral microtubule development. This is Nuclear migration protein JNM1 (JNM1) from Saccharomyces cerevisiae (strain ATCC 204508 / S288c) (Baker's yeast).